The sequence spans 534 residues: Arginine transporter 1 (534 aa).

6 consecutive transmembrane segments (helical) span residues 35–55 (YVLL…YFGW), 99–119 (SLFT…GYLL), 126–146 (AVAL…AFSG), 154–174 (PAFV…LLIV), 182–202 (ALIM…PLVL), and 216–236 (VCIG…FFFI). N-linked (GlcNAc...) asparagine glycosylation is present at asparagine 246. The disordered stretch occupies residues 261–302 (TAQSSPKAVDSPPCDEGASSRGRLAVSHNTERTAPDDEQEKD). The segment covering 289-302 (NTERTAPDDEQEKD) has biased composition (basic and acidic residues). Helical transmembrane passes span 329 to 349 (AFTF…WVMA), 365 to 385 (YTLE…GVVI), 388 to 408 (IGIM…YVCV), 419 to 439 (FSVI…YVFV), 451 to 471 (LIGV…VLYG), and 483 to 503 (RPVV…LLAM).

This sequence belongs to the SLC43A transporter (TC 2.A.1.44) family.

The protein localises to the cell membrane. It carries out the reaction L-arginine(in) = L-arginine(out). Functionally, selective L-arginine transporter that is essential for parasite survival and virulence. Does not require other inorganic ions such as sodium, chloride, potassium or calcium. The polypeptide is Arginine transporter 1 (Toxoplasma gondii (strain ATCC 50611 / Me49)).